The sequence spans 376 residues: Queuine tRNA-ribosyltransferase (376 aa).

Residue Asp-90 is the Proton acceptor of the active site. Residues 90–94, Asp-144, Gln-193, and Gly-220 contribute to the substrate site; that span reads DSGGF. Residues 251–257 are RNA binding; sequence GVGTPED. Residue Asp-270 is the Nucleophile of the active site. An RNA binding; important for wobble base 34 recognition region spans residues 275–279; the sequence is TRNAR. Zn(2+) is bound by residues Cys-308, Cys-310, Cys-313, and His-339.

Belongs to the queuine tRNA-ribosyltransferase family. Homodimer. Within each dimer, one monomer is responsible for RNA recognition and catalysis, while the other monomer binds to the replacement base PreQ1. The cofactor is Zn(2+).

The catalysed reaction is 7-aminomethyl-7-carbaguanine + guanosine(34) in tRNA = 7-aminomethyl-7-carbaguanosine(34) in tRNA + guanine. The protein operates within tRNA modification; tRNA-queuosine biosynthesis. Its function is as follows. Catalyzes the base-exchange of a guanine (G) residue with the queuine precursor 7-aminomethyl-7-deazaguanine (PreQ1) at position 34 (anticodon wobble position) in tRNAs with GU(N) anticodons (tRNA-Asp, -Asn, -His and -Tyr). Catalysis occurs through a double-displacement mechanism. The nucleophile active site attacks the C1' of nucleotide 34 to detach the guanine base from the RNA, forming a covalent enzyme-RNA intermediate. The proton acceptor active site deprotonates the incoming PreQ1, allowing a nucleophilic attack on the C1' of the ribose to form the product. After dissociation, two additional enzymatic reactions on the tRNA convert PreQ1 to queuine (Q), resulting in the hypermodified nucleoside queuosine (7-(((4,5-cis-dihydroxy-2-cyclopenten-1-yl)amino)methyl)-7-deazaguanosine). In Cupriavidus necator (strain ATCC 17699 / DSM 428 / KCTC 22496 / NCIMB 10442 / H16 / Stanier 337) (Ralstonia eutropha), this protein is Queuine tRNA-ribosyltransferase.